Reading from the N-terminus, the 132-residue chain is Histone H2B.9 (132 aa).

The span at methionine 1 to glutamate 11 shows a compositional bias: basic and acidic residues. A disordered region spans residues methionine 1 to serine 41. Position 2 is a n,N,N-trimethylalanine; alternate (alanine 2). Position 2 is a n,N-dimethylalanine; alternate (alanine 2). Alanine 2 is subject to N-methylalanine; alternate. At lysine 4 the chain carries N6-methyllysine. N6-acetyllysine is present on residues lysine 7, lysine 12, lysine 20, and lysine 21. Residue lysine 128 forms a Glycyl lysine isopeptide (Lys-Gly) (interchain with G-Cter in ubiquitin) linkage.

The protein belongs to the histone H2B family. In terms of assembly, the nucleosome is a histone octamer containing two molecules each of H2A, H2B, H3 and H4 assembled in one H3-H4 heterotetramer and two H2A-H2B heterodimers. The octamer wraps approximately 147 bp of DNA. In terms of processing, can be acetylated to form H2BK6ac, H2BK33ac and H2BK34ac. Monoubiquitinated by BRE1 to form H2BK143ub1 and deubiquitinated by UBP26. Required for heterochromatic histone H3 di- and trimethylation at H3K4me. May give a specific tag for epigenetic transcriptional activation.

The protein localises to the nucleus. The protein resides in the chromosome. Core component of nucleosome. Nucleosomes wrap and compact DNA into chromatin, limiting DNA accessibility to the cellular machineries which require DNA as a template. Histones thereby play a central role in transcription regulation, DNA repair, DNA replication and chromosomal stability. DNA accessibility is regulated via a complex set of post-translational modifications of histones, also called histone code, and nucleosome remodeling. The sequence is that of Histone H2B.9 from Arabidopsis thaliana (Mouse-ear cress).